We begin with the raw amino-acid sequence, 213 residues long: MSPSTTTIFIGPILAVDAAVSHAIHTAAKPFLPPFVLLLLEISADFRFSFPVSLSFLLSPPLRSFLVPFLLGLLFDLIFVGIVKLIFRRARPAYNHPSMSAAVSADHYSFPSGHASRVFFVAASVHFFSAAAEASMTGPSYSFLDGWIRDHNDGDVKVEVVVVVWIWATVTAISRILLGRHYVLDVAAGAFLGIVEALFALRFLRFDEMIFGR.

5 consecutive transmembrane segments (helical) span residues 30–50, 67–87, 118–138, 158–178, and 181–201; these read PFLP…RFSF, VPFL…KLIF, VFFV…SMTG, VEVV…RILL, and HYVL…LFAL.

The protein belongs to the PA-phosphatase related phosphoesterase family.

The protein resides in the membrane. In Arabidopsis thaliana (Mouse-ear cress), this protein is Probable lipid phosphate phosphatase beta (LPPB).